The sequence spans 270 residues: Acyl-[acyl-carrier-protein]--UDP-N-acetylglucosamine O-acyltransferase (270 aa).

Substrate is bound by residues Gln69–Lys72, His121, His140, and Gln157.

Belongs to the transferase hexapeptide repeat family. LpxA subfamily. As to quaternary structure, homotrimer.

The protein resides in the cytoplasm. It carries out the reaction a (3R)-hydroxyacyl-[ACP] + UDP-N-acetyl-alpha-D-glucosamine = a UDP-3-O-[(3R)-3-hydroxyacyl]-N-acetyl-alpha-D-glucosamine + holo-[ACP]. The protein operates within glycolipid biosynthesis; lipid IV(A) biosynthesis; lipid IV(A) from (3R)-3-hydroxytetradecanoyl-[acyl-carrier-protein] and UDP-N-acetyl-alpha-D-glucosamine: step 1/6. Involved in the biosynthesis of lipid A, a phosphorylated glycolipid that anchors the lipopolysaccharide to the outer membrane of the cell. This chain is Acyl-[acyl-carrier-protein]--UDP-N-acetylglucosamine O-acyltransferase, found in Helicobacter pylori (strain ATCC 700392 / 26695) (Campylobacter pylori).